A 191-amino-acid chain; its full sequence is Ribosomal RNA small subunit methyltransferase G (191 aa).

S-adenosyl-L-methionine is bound by residues Gly62, Phe67, 111–112, and Arg124; that span reads IE.

The protein belongs to the methyltransferase superfamily. RNA methyltransferase RsmG family.

The protein localises to the cytoplasm. It carries out the reaction guanosine(527) in 16S rRNA + S-adenosyl-L-methionine = N(7)-methylguanosine(527) in 16S rRNA + S-adenosyl-L-homocysteine. Functionally, specifically methylates the N7 position of guanine in position 527 of 16S rRNA. The polypeptide is Ribosomal RNA small subunit methyltransferase G (Rickettsia typhi (strain ATCC VR-144 / Wilmington)).